An 852-amino-acid polypeptide reads, in one-letter code: Bifunctional uridylyltransferase/uridylyl-removing enzyme (852 aa).

The uridylyltransferase stretch occupies residues 1–318 (MPENLSSALE…STPVRVTLRI (318 aa)). The segment at 319 to 672 (DDDYIQVNNQ…SRILPQSDSF (354 aa)) is uridylyl-removing. One can recognise an HD domain in the interval 436–558 (VDDHILAVVR…VQTHERLSAL (123 aa)). ACT domains are found at residues 673-757 (QVMV…SCNR) and 785-852 (SVEI…EQLA).

Belongs to the GlnD family. Mg(2+) serves as cofactor.

The enzyme catalyses [protein-PII]-L-tyrosine + UTP = [protein-PII]-uridylyl-L-tyrosine + diphosphate. It catalyses the reaction [protein-PII]-uridylyl-L-tyrosine + H2O = [protein-PII]-L-tyrosine + UMP + H(+). Uridylyltransferase (UTase) activity is inhibited by glutamine, while glutamine activates uridylyl-removing (UR) activity. Modifies, by uridylylation and deuridylylation, the PII regulatory proteins (GlnB and homologs), in response to the nitrogen status of the cell that GlnD senses through the glutamine level. Under low glutamine levels, catalyzes the conversion of the PII proteins and UTP to PII-UMP and PPi, while under higher glutamine levels, GlnD hydrolyzes PII-UMP to PII and UMP (deuridylylation). Thus, controls uridylylation state and activity of the PII proteins, and plays an important role in the regulation of nitrogen assimilation and metabolism. This chain is Bifunctional uridylyltransferase/uridylyl-removing enzyme, found in Neisseria gonorrhoeae (strain ATCC 700825 / FA 1090).